A 258-amino-acid polypeptide reads, in one-letter code: uncharacterized protein (258 aa).

The helical transmembrane segment at 163–187 threads the bilayer; the sequence is GIVGAAGLMLMFADLNGIPGICLMG.

The protein resides in the membrane. This is an uncharacterized protein from Methanocaldococcus jannaschii (strain ATCC 43067 / DSM 2661 / JAL-1 / JCM 10045 / NBRC 100440) (Methanococcus jannaschii).